Consider the following 463-residue polypeptide: Heterogeneous nuclear ribonucleoprotein K (463 aa).

The residue at position 1 (methionine 1) is an N-acetylmethionine. A disordered region spans residues methionine 1–arginine 37. The interval methionine 1–serine 276 is necessary for interaction with DDX1. Over residues phenylalanine 19–arginine 37 the composition is skewed to basic and acidic residues. At lysine 34 the chain carries N6-acetyllysine; alternate. Lysine 34 is covalently cross-linked (Glycyl lysine isopeptide (Lys-Gly) (interchain with G-Cter in SUMO1); alternate). Lysine 34 participates in a covalent cross-link: Glycyl lysine isopeptide (Lys-Gly) (interchain with G-Cter in SUMO2); alternate. The interaction with ASFV p30 stretch occupies residues arginine 35 to glycine 197. Serine 36 is modified (phosphoserine). Threonine 39 bears the Phosphothreonine mark. Residues methionine 42–isoleucine 104 enclose the KH 1 domain. Residues lysine 52 and lysine 60 each participate in a glycyl lysine isopeptide (Lys-Gly) (interchain with G-Cter in SUMO2) cross-link. Repeat copies occupy residues alanine 54–valine 76 and glycine 59–glycine 62. Residues alanine 54–isoleucine 421 form a 2 X 22 AA approximate repeats region. Residues glycine 59 to glycine 407 form a 5 X 4 AA repeats of G-X-G-G region. Phosphoserine occurs at positions 75 and 116. One can recognise a KH 2 domain in the interval aspartate 144–isoleucine 209. Lysine 163 is covalently cross-linked (Glycyl lysine isopeptide (Lys-Gly) (interchain with G-Cter in SUMO1); alternate). Lysine 163 participates in a covalent cross-link: Glycyl lysine isopeptide (Lys-Gly) (interchain with G-Cter in SUMO2); alternate. An N6-acetyllysine modification is found at lysine 198. The interval isoleucine 209–valine 337 is interaction with ZIK1. Serine 214 and serine 216 each carry phosphoserine. A Glycyl lysine isopeptide (Lys-Gly) (interchain with G-Cter in SUMO2); alternate cross-link involves residue lysine 219. N6-succinyllysine; alternate is present on lysine 219. Residues tyrosine 236–methionine 273 form an RNA-binding RGG-box region. A run of 3 repeats spans residues aspartate 245–proline 250, glycine 257–glycine 260, and glycine 267–glycine 270. A 2 X 6 AA approximate repeats region spans residues aspartate 245–proline 329. The interval proline 250–proline 329 is disordered. Low complexity predominate over residues glycine 252–proline 266. Over residues serine 276–proline 285 the composition is skewed to basic and acidic residues. Phosphoserine is present on serine 284. A 3-4 repeat occupies glycine 295–glycine 298. Arginine 316 carries the post-translational modification Omega-N-methylarginine. A 2-2 repeat occupies aspartate 324–proline 329. Arginine 377 carries the omega-N-methylarginine modification. Serine 379 carries the phosphoserine modification. At tyrosine 380 the chain carries Phosphotyrosine. One can recognise a KH 3 domain in the interval isoleucine 387–leucine 451. Tandem repeats lie at residues alanine 399–isoleucine 421 and glycine 404–glycine 407. Lysine 405 carries the N6-acetyllysine; alternate modification. Lysine 405 participates in a covalent cross-link: Glycyl lysine isopeptide (Lys-Gly) (interchain with G-Cter in SUMO2); alternate. Serine 420 is modified (phosphoserine). A Glycyl lysine isopeptide (Lys-Gly) (interchain with G-Cter in SUMO1); alternate cross-link involves residue lysine 422. Lysine 422 is covalently cross-linked (Glycyl lysine isopeptide (Lys-Gly) (interchain with G-Cter in SUMO2); alternate). Lysine 422 participates in a covalent cross-link: Glycyl lysine isopeptide (Lys-Gly) (interchain with G-Cter in SUMO); alternate.

As to quaternary structure, identified in the spliceosome C complex. Part of a transcription inhibitory ribonucleoprotein complex composed at least of the circular RNA circZNF827, ZNF827 and HNRNPL. Interacts with RBM42 and ZIK1. Interacts with BRDT. Interacts with ANKRD28. Interacts with ASFV p30 protein. Interacts with DDX1. Interacts with MDM2; this interaction leads to ubiquitination and proteasomal degradation. Interacts with p53/TP53. Interacts with IVNS1ABP (via BACK domain); the interaction is direct. Interacts with PPIA/CYPA. (Microbial infection) Interacts with HCV core protein. Arg-296 and Arg-299 are dimethylated, probably to asymmetric dimethylarginine. In terms of processing, sumoylated by CBX4. Sumoylation is increased upon DNA damage, such as that produced by doxorubicin, etoposide, UV light and camptothecin, due to enhanced CBX4 phosphorylation by HIPK2 under these conditions. Post-translationally, ubiquitinated by MDM2. Doxorubicin treatment does not affect monoubiquitination, but slightly decreases HNRNPK poly-ubiquitination. O-glycosylated (O-GlcNAcylated), in a cell cycle-dependent manner.

It localises to the cytoplasm. The protein localises to the nucleus. Its subcellular location is the nucleoplasm. It is found in the cell projection. The protein resides in the podosome. In terms of biological role, one of the major pre-mRNA-binding proteins. Binds tenaciously to poly(C) sequences. Likely to play a role in the nuclear metabolism of hnRNAs, particularly for pre-mRNAs that contain cytidine-rich sequences. Can also bind poly(C) single-stranded DNA. Plays an important role in p53/TP53 response to DNA damage, acting at the level of both transcription activation and repression. When sumoylated, acts as a transcriptional coactivator of p53/TP53, playing a role in p21/CDKN1A and 14-3-3 sigma/SFN induction. As far as transcription repression is concerned, acts by interacting with long intergenic RNA p21 (lincRNA-p21), a non-coding RNA induced by p53/TP53. This interaction is necessary for the induction of apoptosis, but not cell cycle arrest. As part of a ribonucleoprotein complex composed at least of ZNF827, HNRNPL and the circular RNA circZNF827 that nucleates the complex on chromatin, may negatively regulate the transcription of genes involved in neuronal differentiation. This Homo sapiens (Human) protein is Heterogeneous nuclear ribonucleoprotein K (HNRNPK).